The chain runs to 317 residues: MAELACFCYPHLENDSYKFIPFNNLAIKCMLTAKVDKKDQDKFYNSIIYGIAPPPQFKKRYNTNDNSRGMNYETSMFNKVAALICEALNSTKVTQSDIASVLSRVVSVRHLENLVLRRENHQDVLFHSKELLLKSVLIAIGHSKEIETTATAEGGEIVFQNTAFTMWRLTYLEHKLMPILDPNFIEYKITVNEGKPISESHIKELIAELRWQYNKFAVITHGKGHYRVVKYSSVANHADRVYATYKSNNKNGNMLEFNLLDQRIIWQNWYAFTSSMKQGNTLDTCKKLLFQKIKRESNPFKGLSTDRKMDEVSQIGI.

ATP is bound by residues 107–109 (SVR), Lys188, and 221–223 (HGK). An RNA-binding region spans residues 205–241 (LIAELRWQYNKFAVITHGKGHYRVVKYSSVANHADRV). His225 serves as the catalytic For NTPase and RTPase activities. Residue Arg227 coordinates ATP.

Belongs to the rotavirus NSP2 family. Homooctamer. Interacts with VP1; this interaction is weak. Interacts with NSP5; this interaction leads to up-regulation of NSP5 phosphorylation and formation of viral factories. Interacts with host DCP1A, DCP1B, DDX6, EDC4 and EIF2S1/eIF2-alpha; these interactions are probably part of the sequestration of some host SGs and PBs proteins in viral factories. Mg(2+) is required as a cofactor.

It is found in the host cytoplasm. In terms of biological role, participates in replication and packaging of the viral genome. Plays a crucial role, together with NSP5, in the formation of virus factories (viroplasms), which are large inclusions in the host cytoplasm where replication intermediates are assembled and viral RNA replication takes place. Displays ssRNA binding, NTPase, RNA triphosphatase (RTPase) and ATP-independent helix-unwinding activities. The unwinding activity may prepare and organize plus-strand RNAs for packaging and replication by removing interfering secondary structures. The RTPase activity plays a role in the removal of the gamma-phosphate from the rotavirus RNA minus strands of dsRNA genome segments. Participates in the selective exclusion of host proteins from stress granules (SG) and P bodies (PB). Also participates in the sequestration of these remodeled organelles in viral factories. This is Non-structural protein 2 from Rotavirus A (strain RVA/Human/United States/DS-1/1976/G2P1B[4]) (RV-A).